The following is a 479-amino-acid chain: Glycogen synthase (479 aa).

Position 16 (Lys16) interacts with ADP-alpha-D-glucose.

The protein belongs to the glycosyltransferase 1 family. Bacterial/plant glycogen synthase subfamily.

The enzyme catalyses [(1-&gt;4)-alpha-D-glucosyl](n) + ADP-alpha-D-glucose = [(1-&gt;4)-alpha-D-glucosyl](n+1) + ADP + H(+). It participates in glycan biosynthesis; glycogen biosynthesis. Functionally, synthesizes alpha-1,4-glucan chains using ADP-glucose. This Lactiplantibacillus plantarum (strain ATCC BAA-793 / NCIMB 8826 / WCFS1) (Lactobacillus plantarum) protein is Glycogen synthase.